Reading from the N-terminus, the 58-residue chain is Large ribosomal subunit protein bL32 (58 aa).

This sequence belongs to the bacterial ribosomal protein bL32 family.

The polypeptide is Large ribosomal subunit protein bL32 (Caldicellulosiruptor bescii (strain ATCC BAA-1888 / DSM 6725 / KCTC 15123 / Z-1320) (Anaerocellum thermophilum)).